Reading from the N-terminus, the 199-residue chain is Probable nicotinate-nucleotide adenylyltransferase (199 aa).

This sequence belongs to the NadD family.

The enzyme catalyses nicotinate beta-D-ribonucleotide + ATP + H(+) = deamido-NAD(+) + diphosphate. It functions in the pathway cofactor biosynthesis; NAD(+) biosynthesis; deamido-NAD(+) from nicotinate D-ribonucleotide: step 1/1. Functionally, catalyzes the reversible adenylation of nicotinate mononucleotide (NaMN) to nicotinic acid adenine dinucleotide (NaAD). This chain is Probable nicotinate-nucleotide adenylyltransferase, found in Roseobacter denitrificans (strain ATCC 33942 / OCh 114) (Erythrobacter sp. (strain OCh 114)).